Here is a 1883-residue protein sequence, read N- to C-terminus: Transmembrane protein 131 (1883 aa).

The signal sequence occupies residues 1-22 (MGKRAGGGATGATTAAVSTSAG). The Lumenal portion of the chain corresponds to 23-1117 (AGLEPAAARS…AEALPRPNWE (1095 aa)). The papD-L domain stretch occupies residues 109-283 (RFEPPMLDFH…ETKGVMRASF (175 aa)). Asn-300 carries an N-linked (GlcNAc...) asparagine glycan. Ser-803 carries the phosphoserine modification. A helical membrane pass occupies residues 1118–1138 (LALYIIISGIMSALFLLVIGT). Residues 1139-1883 (AYLEAQGIWE…WSNSHFPHEN (745 aa)) are Cytoplasmic-facing. 5 disordered regions span residues 1198 to 1580 (GAGG…DSLY), 1593 to 1656 (LKQR…KNGN), 1670 to 1712 (PGGN…PVSN), 1766 to 1789 (WESP…HTAT), and 1832 to 1858 (MGTE…TYNP). Over residues 1237 to 1261 (AKNSSSTSSRTSAQAASSQSANKTS) the composition is skewed to low complexity. Residues 1302–1316 (PQPPLPPPVPQPQEP) are compositionally biased toward pro residues. Phosphoserine is present on residues Ser-1322 and Ser-1342. Composition is skewed to basic and acidic residues over residues 1330 to 1343 (SHPE…HSSE) and 1353 to 1364 (AMDKDFDHHDSP). Phosphoserine is present on Ser-1375. The segment covering 1380 to 1394 (SKGKGKPLQRKVKPP) has biased composition (basic residues). The span at 1395–1417 (KKQEEKEKKGKGKPQEDELKDSL) shows a compositional bias: basic and acidic residues. The span at 1423-1434 (SSTTTETSNPDT) shows a compositional bias: low complexity. Basic and acidic residues predominate over residues 1436–1458 (PLLKEDTEKQKGKQAMPEKHESE). 2 stretches are compositionally biased toward polar residues: residues 1510-1526 (AMTS…TKGT) and 1542-1553 (PNSQELGNTSSS). Positions 1602-1611 (PASPSPPAAP) are enriched in pro residues. A compositionally biased stretch (low complexity) spans 1619–1630 (SYSSIVNSSSSS). Residues 1678–1690 (VSSNKTGFSSSLG) are compositionally biased toward polar residues. 2 stretches are compositionally biased toward low complexity: residues 1773 to 1784 (PSPSWPASSGSP) and 1837 to 1849 (SPAP…SSPA). A phosphoserine mark is found at Ser-1863 and Ser-1871.

This sequence belongs to the TMEM131 family. Interacts (via PapD-L domain) with COL1A2 (via C-terminus); the interaction is direct, may occur with other collagen proteins, and is involved in assembly and TRAPPIII ER-to-Golgi transport complex-dependent secretion of collagen. Interacts (via C-terminus) with TRAPPC8 (via C-terminus); the interaction is direct.

The protein localises to the membrane. Its function is as follows. Collagen binding transmembrane protein involved in collagen secretion by recruiting the ER-to-Golgi transport complex TRAPPIII. May play a role in the immune response to viral infection. This is Transmembrane protein 131 from Homo sapiens (Human).